The following is a 291-amino-acid chain: Elongation factor Ts, mitochondrial (291 aa).

Belongs to the EF-Ts family.

It is found in the mitochondrion. In terms of biological role, associates with the EF-Tu.GDP complex and induces the exchange of GDP to GTP. It remains bound to the aminoacyl-tRNA.EF-Tu.GTP complex up to the GTP hydrolysis stage on the ribosome. The sequence is that of Elongation factor Ts, mitochondrial from Nematostella vectensis (Starlet sea anemone).